A 198-amino-acid polypeptide reads, in one-letter code: MTATGTSVSLLKFVGTVSLGLLTGVSYSISSLALPALLRLPSSASASHGLSTLSAALKTPVLALTSLASAPFLISFFLAPRSSRHPYLLYTAILATLSSVAPILIPTPTPAPRRTASSAPRKSSRAKMEASYEVLGDAHSEPASDEDIEDINGEEVRAEVEGLTRSYLARTAISALGFAMAVVGIWGDGAPQSVVYVS.

3 helical membrane-spanning segments follow: residues 17-37, 60-80, and 86-106; these read VSLGLLTGVSYSISSLALPAL, PVLALTSLASAPFLISFFLAP, and PYLLYTAILATLSSVAPILIP. Residues 111–147 form a disordered region; the sequence is APRRTASSAPRKSSRAKMEASYEVLGDAHSEPASDED. Residues 112 to 121 are compositionally biased toward low complexity; it reads PRRTASSAPR. Residues 126-142 are compositionally biased toward basic and acidic residues; the sequence is AKMEASYEVLGDAHSEP. A helical transmembrane segment spans residues 171-191; the sequence is TAISALGFAMAVVGIWGDGAP.

The protein belongs to the ATG33 family.

The protein localises to the mitochondrion membrane. Its function is as follows. Involved in the selective degradation of mitochondria via autophagy during starvation and at post-log phase. Autophagy is required for proper vegetative growth, asexual/sexual reproduction, and full virulence. Autophagy is particularly involved in the biosynthesis of deoxynivalenol (DON), an important virulence determinant. The polypeptide is Autophagy-related protein 33 (Gibberella zeae (strain ATCC MYA-4620 / CBS 123657 / FGSC 9075 / NRRL 31084 / PH-1) (Wheat head blight fungus)).